We begin with the raw amino-acid sequence, 417 residues long: Paired box protein Pax-2 (417 aa).

The segment at residues 16–142 (GHGGVNQLGG…SSINRIIRTK (127 aa)) is a DNA-binding region (paired). Positions 19-75 (GVNQLGGVFVNGRPLPDVVRQRIVELAHQGVRPCDISRQLRVSHGCVSKILGRYYET) are PAI subdomain. The interval 94–142 (KVVDKIAEYKRQNPTMFAWEIRDRLLAEGICDNDTVPSVSSINRIIRTK) is RED subdomain. Thr226 is modified (phosphothreonine). The disordered stretch occupies residues 304–325 (KSSLSASTNPELGSNVSGTQTY). The segment covering 305 to 325 (SSLSASTNPELGSNVSGTQTY) has biased composition (polar residues).

Interacts with ELGN3; the interaction targets PAX2 for destruction. Interacts with TLE4. As to expression, expressed in primitive cells of the kidney, ureter, eye, ear and central nervous system.

The protein localises to the nucleus. In terms of biological role, transcription factor that may have a role in kidney cell differentiation. Has a critical role in the development of the urogenital tract, the eyes, and the CNS. This is Paired box protein Pax-2 (PAX2) from Homo sapiens (Human).